Reading from the N-terminus, the 308-residue chain is Polyprenyl-phosphate transporter (308 aa).

A run of 8 helical transmembrane segments spans residues 15–35 (GLAM…IAFI), 69–89 (INGL…ATLA), 91–111 (LISW…FGLI), 130–150 (LLWL…KPLH), 163–183 (AIAI…LLLI), 200–220 (ILLI…HILS), 228–248 (DVTL…IWPW), and 282–302 (PSQW…VLGL).

It belongs to the PopT family.

It localises to the cell inner membrane. Active in alkaline conditions. Functionally, flippase that catalyzes the transport of undecaprenyl phosphate (UndP) across the cytoplasmic membrane, from the external side to the cytoplasmic side. Is involved in UndP recycling during peptidoglycan synthesis. Required for cell shape maintenance at alkaline pH and peptidoglycan maintenance. Required by the cholera pathogen for growth and cell shape maintenance in the intestine. This Vibrio cholerae serotype O1 (strain ATCC 39315 / El Tor Inaba N16961) protein is Polyprenyl-phosphate transporter.